The chain runs to 459 residues: Putrescine aminotransferase (459 aa).

Residues 150 to 151 (GT) and glutamine 274 each bind pyridoxal 5'-phosphate. N6-(pyridoxal phosphate)lysine is present on lysine 300. Residue threonine 332 coordinates pyridoxal 5'-phosphate.

Belongs to the class-III pyridoxal-phosphate-dependent aminotransferase family. Putrescine aminotransferase subfamily. Requires pyridoxal 5'-phosphate as cofactor.

The catalysed reaction is an alkane-alpha,omega-diamine + 2-oxoglutarate = an omega-aminoaldehyde + L-glutamate. The enzyme catalyses putrescine + 2-oxoglutarate = 1-pyrroline + L-glutamate + H2O. It catalyses the reaction cadaverine + 2-oxoglutarate = 5-aminopentanal + L-glutamate. The protein operates within amine and polyamine degradation; putrescine degradation; 4-aminobutanal from putrescine (transaminase route): step 1/1. Functionally, catalyzes the aminotransferase reaction from putrescine to 2-oxoglutarate, leading to glutamate and 4-aminobutanal, which spontaneously cyclizes to form 1-pyrroline. This is the first step in one of two pathways for putrescine degradation, where putrescine is converted into 4-aminobutanoate (gamma-aminobutyrate or GABA) via 4-aminobutanal. Also functions as a cadaverine transaminase in a a L-lysine degradation pathway to succinate that proceeds via cadaverine, glutarate and L-2-hydroxyglutarate. The protein is Putrescine aminotransferase of Escherichia coli (strain K12 / MC4100 / BW2952).